Reading from the N-terminus, the 203-residue chain is Peptidyl-tRNA hydrolase (203 aa).

Tyr18 is a tRNA binding site. Catalysis depends on His23, which acts as the Proton acceptor. TRNA contacts are provided by Tyr69, Asn71, and Asn117.

The protein belongs to the PTH family. In terms of assembly, monomer.

Its subcellular location is the cytoplasm. The enzyme catalyses an N-acyl-L-alpha-aminoacyl-tRNA + H2O = an N-acyl-L-amino acid + a tRNA + H(+). Hydrolyzes ribosome-free peptidyl-tRNAs (with 1 or more amino acids incorporated), which drop off the ribosome during protein synthesis, or as a result of ribosome stalling. Its function is as follows. Catalyzes the release of premature peptidyl moieties from peptidyl-tRNA molecules trapped in stalled 50S ribosomal subunits, and thus maintains levels of free tRNAs and 50S ribosomes. This Parasynechococcus marenigrum (strain WH8102) protein is Peptidyl-tRNA hydrolase.